The following is a 493-amino-acid chain: Serine/threonine-protein kinase 3 (493 aa).

Positions 26–277 constitute a Protein kinase domain; sequence FDVLEKLGEG…ATQLLQHPFI (252 aa). Residues 32-40 and Lys55 contribute to the ATP site; that span reads LGEGSYGSV. Catalysis depends on Asp145, which acts as the Proton acceptor. At Thr179 the chain carries Phosphothreonine; by autocatalysis. A coiled-coil region spans residues 286 to 327; it reads LRDLITEAMDIKAKRHEELQRELEEEDENSEEDELDSHTMVK. Disordered regions lie at residues 303 to 336 and 369 to 414; these read ELQR…AGTM and DDEE…NCNQ. The span at 308-320 shows a compositional bias: acidic residues; sequence LEEEDENSEEDEL. Positions 325–336 are enriched in polar residues; the sequence is MVKTNSESAGTM. Over residues 369–378 the composition is skewed to acidic residues; it reads DDEEEEEEED. Residues 398-410 are compositionally biased toward basic and acidic residues; that stretch reads YFDKQDSKNKPHD. The SARAH domain occupies 439 to 486; it reads FDFLKNLSFEELQMRLKALDPMMEREIEDLRQRYNAKRQPILDAMDAK. Positions 444-477 form a coiled coil; that stretch reads NLSFEELQMRLKALDPMMEREIEDLRQRYNAKRQ.

The protein belongs to the protein kinase superfamily. STE Ser/Thr protein kinase family. STE20 subfamily. In terms of assembly, homodimer; mediated via the coiled-coil region. Mg(2+) serves as cofactor.

It is found in the cytoplasm. The protein resides in the nucleus. The enzyme catalyses L-seryl-[protein] + ATP = O-phospho-L-seryl-[protein] + ADP + H(+). The catalysed reaction is L-threonyl-[protein] + ATP = O-phospho-L-threonyl-[protein] + ADP + H(+). With respect to regulation, inhibited by the C-terminal non-catalytic region. Activated by caspase-cleavage. Full activation also requires homodimerization and autophosphorylation of Thr-179. Stress-activated, pro-apoptotic kinase which, following caspase-cleavage, enters the nucleus and induces chromatin condensation followed by internucleosomal DNA fragmentation. Key component of the Hippo signaling pathway which plays a pivotal role in organ size control and tumor suppression by restricting proliferation and promoting apoptosis. The core of this pathway is composed of a kinase cascade wherein stk3/mst2 and stk4/mst1, in complex with its regulatory protein sav1, phosphorylates and activates lats1/2 in complex with its regulatory protein mob1, which in turn phosphorylates and inactivates yap1 oncoprotein and wwtr1/taz. Phosphorylation of yap1 by lats2 inhibits its translocation into the nucleus to regulate cellular genes important for cell proliferation, cell death, and cell migration. In Xenopus laevis (African clawed frog), this protein is Serine/threonine-protein kinase 3 (stk3).